Consider the following 58-residue polypeptide: Putative calcium channel toxin 196 (58 aa).

A signal peptide spans 1–16; the sequence is GSLLLVLFLLSVICYA. The propeptide occupies 17–26; the sequence is EIAAGPTKCQ. 3 disulfide bridges follow: Cys25-Cys38, Cys31-Cys43, and Cys37-Cys52.

Belongs to the scorpion calcin-like family. KTX subfamily. As to expression, expressed by the venom gland.

The protein resides in the secreted. May inhibit voltage-gated potassium channels Kv1.1/KCNA1, hKv1.2/KCNA2, and Kv1.3/KCNA3. May also increase intracellular calcium release through the activation of nuclear inositol 1,4,5-trisphosphate receptors (ITPR) of cardiomyocytes, thereby causing an increase in the contraction frequency of these cells. The sequence is that of Putative calcium channel toxin 196 from Lychas mucronatus (Chinese swimming scorpion).